The primary structure comprises 205 residues: SREBP regulating gene protein (205 aa).

Residues methionine 1–arginine 16 are Cytoplasmic-facing. A helical membrane pass occupies residues tryptophan 17–phenylalanine 35. Over lysine 36–alanine 205 the chain is Lumenal. An N-linked (GlcNAc...) asparagine glycan is attached at asparagine 67.

It belongs to the SPRING family. As to quaternary structure, interacts with SCAP.

The protein localises to the golgi apparatus membrane. Functionally, positively regulates hepatic SREBP signaling pathway by modulating the proper localization of SCAP (SREBP cleavage-activating protein) to the endoplasmic reticulum, thereby controlling the level of functional SCAP. This Bos taurus (Bovine) protein is SREBP regulating gene protein.